Here is a 467-residue protein sequence, read N- to C-terminus: 2-succinylbenzoate--CoA ligase (467 aa).

The protein belongs to the ATP-dependent AMP-binding enzyme family. MenE subfamily.

It carries out the reaction 2-succinylbenzoate + ATP + CoA = 2-succinylbenzoyl-CoA + AMP + diphosphate. It participates in quinol/quinone metabolism; 1,4-dihydroxy-2-naphthoate biosynthesis; 1,4-dihydroxy-2-naphthoate from chorismate: step 5/7. The protein operates within quinol/quinone metabolism; menaquinone biosynthesis. In terms of biological role, converts 2-succinylbenzoate (OSB) to 2-succinylbenzoyl-CoA (OSB-CoA). This chain is 2-succinylbenzoate--CoA ligase, found in Listeria monocytogenes serotype 4b (strain F2365).